The following is a 529-amino-acid chain: Protein PAT1 homolog 2 (529 aa).

Residues 153 to 183 (QILQQQQRWRRRRSPTARSVPAQKPWSREPA) are disordered.

Belongs to the PAT1 family. In terms of assembly, interacts with LSM1.

The protein resides in the cytoplasm. Its subcellular location is the nucleus. Its function is as follows. RNA-binding protein that acts as a translational repressor. The protein is Protein PAT1 homolog 2 (Patl2) of Mus musculus (Mouse).